The following is a 544-amino-acid chain: CTP synthase (544 aa).

The interval M1–L265 is amidoligase domain. S13 is a CTP binding site. UTP is bound at residue S13. S14–L19 is an ATP binding site. Position 54 (Y54) interacts with L-glutamine. D71 contacts ATP. Positions 71 and 139 each coordinate Mg(2+). Residues D146–E148, K186–Q191, and K222 contribute to the CTP site. Residues K186–Q191 and K222 each bind UTP. Residues T291–L543 form the Glutamine amidotransferase type-1 domain. Residue G355 coordinates L-glutamine. C382 (nucleophile; for glutamine hydrolysis) is an active-site residue. L-glutamine contacts are provided by residues L383–Q386, E406, and R471. Active-site residues include H516 and E518.

Belongs to the CTP synthase family. As to quaternary structure, homotetramer.

The catalysed reaction is UTP + L-glutamine + ATP + H2O = CTP + L-glutamate + ADP + phosphate + 2 H(+). It carries out the reaction L-glutamine + H2O = L-glutamate + NH4(+). It catalyses the reaction UTP + NH4(+) + ATP = CTP + ADP + phosphate + 2 H(+). It participates in pyrimidine metabolism; CTP biosynthesis via de novo pathway; CTP from UDP: step 2/2. Its activity is regulated as follows. Allosterically activated by GTP, when glutamine is the substrate; GTP has no effect on the reaction when ammonia is the substrate. The allosteric effector GTP functions by stabilizing the protein conformation that binds the tetrahedral intermediate(s) formed during glutamine hydrolysis. Inhibited by the product CTP, via allosteric rather than competitive inhibition. Its function is as follows. Catalyzes the ATP-dependent amination of UTP to CTP with either L-glutamine or ammonia as the source of nitrogen. Regulates intracellular CTP levels through interactions with the four ribonucleotide triphosphates. The sequence is that of CTP synthase from Zymomonas mobilis subsp. mobilis (strain ATCC 31821 / ZM4 / CP4).